The following is a 224-amino-acid chain: 7-cyano-7-deazaguanine synthase (224 aa).

Residue 9–19 (LSGGLDSATVL) participates in ATP binding. Positions 189, 199, 202, and 205 each coordinate Zn(2+).

Belongs to the QueC family. It depends on Zn(2+) as a cofactor.

The catalysed reaction is 7-carboxy-7-deazaguanine + NH4(+) + ATP = 7-cyano-7-deazaguanine + ADP + phosphate + H2O + H(+). It functions in the pathway purine metabolism; 7-cyano-7-deazaguanine biosynthesis. Catalyzes the ATP-dependent conversion of 7-carboxy-7-deazaguanine (CDG) to 7-cyano-7-deazaguanine (preQ(0)). In Ralstonia pickettii (strain 12J), this protein is 7-cyano-7-deazaguanine synthase.